A 239-amino-acid chain; its full sequence is Phosphoribosylaminoimidazole-succinocarboxamide synthase (239 aa).

This sequence belongs to the SAICAR synthetase family.

The catalysed reaction is 5-amino-1-(5-phospho-D-ribosyl)imidazole-4-carboxylate + L-aspartate + ATP = (2S)-2-[5-amino-1-(5-phospho-beta-D-ribosyl)imidazole-4-carboxamido]succinate + ADP + phosphate + 2 H(+). The protein operates within purine metabolism; IMP biosynthesis via de novo pathway; 5-amino-1-(5-phospho-D-ribosyl)imidazole-4-carboxamide from 5-amino-1-(5-phospho-D-ribosyl)imidazole-4-carboxylate: step 1/2. In Campylobacter hominis (strain ATCC BAA-381 / DSM 21671 / CCUG 45161 / LMG 19568 / NCTC 13146 / CH001A), this protein is Phosphoribosylaminoimidazole-succinocarboxamide synthase.